The primary structure comprises 283 residues: Succinate dehydrogenase [ubiquinone] iron-sulfur subunit, mitochondrial (283 aa).

The region spanning 66-145 is the 2Fe-2S ferredoxin-type domain; that stretch reads KKPTLQTYSI…PVKIYPLPHM (80 aa). Residues Cys-105, Cys-110, Cys-113, and Cys-125 each contribute to the [2Fe-2S] cluster site. Positions 186 to 216 constitute a 4Fe-4S ferredoxin-type domain; that stretch reads DRKKLDGMYECILCACCSTSCPSYWWNQDEY. Residues Cys-196, Cys-199, and Cys-202 each coordinate [4Fe-4S] cluster. Cys-206 serves as a coordination point for [3Fe-4S] cluster. Trp-211 provides a ligand contact to a ubiquinone. Residues Cys-253 and Cys-259 each contribute to the [3Fe-4S] cluster site. Cys-263 is a binding site for [4Fe-4S] cluster.

It belongs to the succinate dehydrogenase/fumarate reductase iron-sulfur protein family. In terms of assembly, component of complex II composed of four subunits: a flavoprotein (FP), an iron-sulfur protein (IP), and a cytochrome b composed of a large and a small subunit. [2Fe-2S] cluster is required as a cofactor. The cofactor is [3Fe-4S] cluster. It depends on [4Fe-4S] cluster as a cofactor.

It is found in the mitochondrion inner membrane. The enzyme catalyses a quinone + succinate = fumarate + a quinol. The protein operates within carbohydrate metabolism; tricarboxylic acid cycle; fumarate from succinate (eukaryal route): step 1/1. Iron-sulfur protein (IP) subunit of succinate dehydrogenase (SDH) that is involved in complex II of the mitochondrial electron transport chain and is responsible for transferring electrons from succinate to ubiquinone (coenzyme Q). This is Succinate dehydrogenase [ubiquinone] iron-sulfur subunit, mitochondrial (SDH2) from Uromyces fabae (Rust fungus).